A 286-amino-acid polypeptide reads, in one-letter code: ATP synthase gamma chain (286 aa).

The protein belongs to the ATPase gamma chain family. As to quaternary structure, F-type ATPases have 2 components, CF(1) - the catalytic core - and CF(0) - the membrane proton channel. CF(1) has five subunits: alpha(3), beta(3), gamma(1), delta(1), epsilon(1). CF(0) has three main subunits: a, b and c.

Its subcellular location is the cell inner membrane. In terms of biological role, produces ATP from ADP in the presence of a proton gradient across the membrane. The gamma chain is believed to be important in regulating ATPase activity and the flow of protons through the CF(0) complex. This is ATP synthase gamma chain from Pseudomonas putida (strain W619).